The sequence spans 197 residues: dITP/XTP pyrophosphatase (197 aa).

A substrate-binding site is contributed by 8-13; the sequence is TKNKGK. Mg(2+)-binding residues include Glu42 and Asp71. Asp71 functions as the Proton acceptor in the catalytic mechanism. Substrate-binding positions include Ser72, 154–157, Lys177, and 182–183; these read FGYD and HR.

The protein belongs to the HAM1 NTPase family. As to quaternary structure, homodimer. Mg(2+) serves as cofactor.

The enzyme catalyses XTP + H2O = XMP + diphosphate + H(+). The catalysed reaction is dITP + H2O = dIMP + diphosphate + H(+). It carries out the reaction ITP + H2O = IMP + diphosphate + H(+). In terms of biological role, pyrophosphatase that catalyzes the hydrolysis of nucleoside triphosphates to their monophosphate derivatives, with a high preference for the non-canonical purine nucleotides XTP (xanthosine triphosphate), dITP (deoxyinosine triphosphate) and ITP. Seems to function as a house-cleaning enzyme that removes non-canonical purine nucleotides from the nucleotide pool, thus preventing their incorporation into DNA/RNA and avoiding chromosomal lesions. This is dITP/XTP pyrophosphatase from Oceanobacillus iheyensis (strain DSM 14371 / CIP 107618 / JCM 11309 / KCTC 3954 / HTE831).